Here is a 417-residue protein sequence, read N- to C-terminus: SNF1 protein kinase subunit beta-3 (417 aa).

Residues 1–12 (MAGDNPENKDAS) show a composition bias toward basic and acidic residues. The tract at residues 1 to 37 (MAGDNPENKDASMLDVSDAASNTTINGKHSADSTNEA) is disordered. S12, S21, S44, and S135 each carry phosphoserine. Polar residues predominate over residues 19–37 (AASNTTINGKHSADSTNEA). Disordered regions lie at residues 64-155 (SSLI…VEGK) and 250-269 (GNEP…DDSK). Positions 118-136 (TGNTLQKMDYQPSQQPDSL) are enriched in polar residues. Residues 137 to 149 (QNQGFQQQQEQQQ) show a composition bias toward low complexity. The tract at residues 152–342 (VEGKKGRAMM…DQQQNNHQNM (191 aa)) is kinase-interacting sequence (KIS); required for interaction with SNF1. Residues 257-269 (LAEKKANHVDDSK) show a composition bias toward basic and acidic residues. Phosphoserine is present on residues S276 and S279. An association with SNF1 kinase complex (ASC) domain; required for interaction with SNF4 region spans residues 343 to 417 (AWLTPPQLPP…VTQILYTPLQ (75 aa)).

It belongs to the 5'-AMP-activated protein kinase beta subunit family. In terms of assembly, component of the SNF1 kinase complex, a heterotrimeric complex composed of the catalytic alpha subunit SNF1, one of the three related beta subunits SIP1, SIP2 or GAL83, and the regulatory gamma subunit SNF4. The beta subunit serves as a bridge between the catalytic and the regulatory subunit. Interacts (via KIS domain) with SNF1. Interacts (via ASC domain) with SNF4. Interacts with REE1. Phosphorylated by SNF1 in vitro.

The protein localises to the cytoplasm. It localises to the nucleus. Beta subunit of the SNF1 kinase complex, which is required for transcriptional, metabolic, and developmental adaptations in response to glucose limitation. Has a structural role, mediating heterotrimer formation, and a regulatory role, defining carbon source-regulated subcellular location and substrate specificity of the SNF1 kinase complex. Promotes the relocalization of the SNF1 kinase complex to the nucleus upon shift to nonfermentable carbon sources. The chain is SNF1 protein kinase subunit beta-3 (GAL83) from Saccharomyces cerevisiae (strain ATCC 204508 / S288c) (Baker's yeast).